A 435-amino-acid polypeptide reads, in one-letter code: MAAPLVLVLVVAVTVRAALFRSSLAEFISERVEVVSPLSSWKRVVEGLSLLDLGVSPYSGAVFHETPLIIYLFHFLIDYAELVFMITDALTAIALYFAIQDFNKVVFKKQKLLLELDQYAPDVAELIRTPMEMRYIPLKVALFYLLNPYTILSCVAKSTCAINNTLIAFFILTTIKGSAFLSAIFLALATYQSLYPLTLFVPGLLYLLQRQYIPVKMKSKAFWIFSWEYAMMYVGSLVVIICLSFFLLSSWDFIPAVYGFILSVPDLTPNIGLFWYFFAEMFEHFSLFFVCVFQINVFFYTIPLAIKLKEHPIFFMFIQIAVIAIFKSYPTVGDVALYMAFFPVWNHLYRFLRNIFVLTCIIIVCSLLFPVLWHLWIYAGSANSNFFYAITLTFNVGQILLISDYFYAFLRREYYLTHGLYLTAKDGTEAMLVLK.

Over 2 to 3 the chain is Cytoplasmic; the sequence is AA. The chain crosses the membrane as a helical span at residues 4–22; that stretch reads PLVLVLVVAVTVRAALFRS. Topologically, residues 23 to 78 are lumenal; that stretch reads SLAEFISERVEVVSPLSSWKRVVEGLSLLDLGVSPYSGAVFHETPLIIYLFHFLID. Residues 79 to 99 traverse the membrane as a helical segment; that stretch reads YAELVFMITDALTAIALYFAI. Over 100-136 the chain is Cytoplasmic; it reads QDFNKVVFKKQKLLLELDQYAPDVAELIRTPMEMRYI. Helical transmembrane passes span 137–158, 159–178, 179–194, and 195–205; these read PLKV…VAKS, TCAI…IKGS, AFLS…YQSL, and YPLTLFVPGLL. Over 206–222 the chain is Cytoplasmic; it reads YLLQRQYIPVKMKSKAF. Residues K216 and M217 each contribute to the a cardiolipin site. The helical transmembrane segment at 223-244 threads the bilayer; it reads WIFSWEYAMMYVGSLVVIICLS. Residues 245–286 lie on the Lumenal side of the membrane; it reads FFLLSSWDFIPAVYGFILSVPDLTPNIGLFWYFFAEMFEHFS. Residues 287–306 form a helical membrane-spanning segment; that stretch reads LFFVCVFQINVFFYTIPLAI. Residues 307-311 lie on the Cytoplasmic side of the membrane; sequence KLKEH. K309 lines the a cardiolipin pocket. Transmembrane regions (helical) follow at residues 312–331 and 332–345; these read PIFF…SYPT and VGDV…FPVW. The Cytoplasmic segment spans residues 346–354; sequence NHLYRFLRN. The helical transmembrane segment at 355-372 threads the bilayer; sequence IFVLTCIIIVCSLLFPVL. Over 373 to 384 the chain is Lumenal; it reads WHLWIYAGSANS. Positions 383 and 385 each coordinate a 2-acyl-6-[6-phosphoethanolamine-alpha-D-mannosyl-(1-&gt;2)-6-phosphoethanolamine-alpha-D-mannosyl-(1-&gt;6)-2-phosphoethanolamine-alpha-D-mannosyl-(1-&gt;4)-alpha-D-glucosaminyl]-1-(1-radyl,2-acyl-sn-glycero-3-phospho)-1D-myo-inositol. Residues 385-406 traverse the membrane as a helical segment; it reads NFFYAITLTFNVGQILLISDYF. The Cytoplasmic portion of the chain corresponds to 407–435; it reads YAFLRREYYLTHGLYLTAKDGTEAMLVLK.

Belongs to the PIGU family. As to quaternary structure, heteropentamer. Part of the GPI-anchor transamidase complex, consisting of PIGK, PIGT, PIGS, PIGU and GAA1.

The protein localises to the endoplasmic reticulum membrane. Its pathway is glycolipid biosynthesis; glycosylphosphatidylinositol-anchor biosynthesis. Functionally, component of the glycosylphosphatidylinositol-anchor (GPI-anchor) transamidase (GPI-T) complex that catalyzes the formation of the linkage between a proprotein and a GPI-anchor and participates in GPI anchored protein biosynthesis. Binds the lipid portion of GPI-anchor. May act as an organizer in the transmembrane layer to recruit other subunits, and thus is essential for assembly of the complex. This is GPI-anchor transamidase component PIGU from Homo sapiens (Human).